Consider the following 216-residue polypeptide: Ras-related protein RABE1a (216 aa).

Position 22–29 (22–29 (GDSGVGKS)) interacts with GTP. Residues 44 to 52 (FITTIGIDF) carry the Effector region motif. Residues 70 to 74 (DTAGQ), 128 to 131 (NKAD), and 159 to 160 (SA) each bind GTP. The interval 185–216 (DARAEPQTIKINQSDQGAGTSQATQKSACCGT) is disordered. A compositionally biased stretch (polar residues) spans 193-216 (IKINQSDQGAGTSQATQKSACCGT). Residues cysteine 213 and cysteine 214 are each lipidated (S-geranylgeranyl cysteine).

This sequence belongs to the small GTPase superfamily. Rab family. In terms of assembly, interacts with PI5K2.

The protein localises to the golgi apparatus membrane. Its subcellular location is the cell membrane. Involved in membrane trafficking from the Golgi to the plasma membrane. The sequence is that of Ras-related protein RABE1a (RABE1A) from Arabidopsis thaliana (Mouse-ear cress).